The sequence spans 446 residues: L-2-hydroxyglutarate dehydrogenase, mitochondrial (446 aa).

A mitochondrion-targeting transit peptide spans 1–28 (MKNSSSMLKGVKSFIGSGIYTNKPIYDV).

This sequence belongs to the L2HGDH family. FAD serves as cofactor.

Its subcellular location is the mitochondrion. The catalysed reaction is (S)-2-hydroxyglutarate + A = 2-oxoglutarate + AH2. This is L-2-hydroxyglutarate dehydrogenase, mitochondrial (l2hgdh) from Dictyostelium discoideum (Social amoeba).